The following is a 380-amino-acid chain: Cobalt-precorrin-5B C(1)-methyltransferase (380 aa).

This sequence belongs to the CbiD family.

The enzyme catalyses Co-precorrin-5B + S-adenosyl-L-methionine = Co-precorrin-6A + S-adenosyl-L-homocysteine. It participates in cofactor biosynthesis; adenosylcobalamin biosynthesis; cob(II)yrinate a,c-diamide from sirohydrochlorin (anaerobic route): step 6/10. Its function is as follows. Catalyzes the methylation of C-1 in cobalt-precorrin-5B to form cobalt-precorrin-6A. The sequence is that of Cobalt-precorrin-5B C(1)-methyltransferase from Salinispora tropica (strain ATCC BAA-916 / DSM 44818 / JCM 13857 / NBRC 105044 / CNB-440).